The sequence spans 345 residues: D-fructose 1,6-bisphosphatase class 2/sedoheptulose 1,7-bisphosphatase (345 aa).

Residues Asp-33, Glu-57, Asp-97, and Glu-100 each coordinate Mn(2+). Residues 100-102 (EGT), Tyr-131, 176-178 (RPR), and 198-200 (DGD) each bind substrate. Glu-225 is a Mn(2+) binding site.

Belongs to the FBPase class 2 family. Homotetramer. It depends on Mn(2+) as a cofactor.

The enzyme catalyses beta-D-fructose 1,6-bisphosphate + H2O = beta-D-fructose 6-phosphate + phosphate. It catalyses the reaction D-sedoheptulose 1,7-bisphosphate + H2O = D-sedoheptulose 7-phosphate + phosphate. It functions in the pathway carbohydrate biosynthesis; Calvin cycle. In terms of biological role, catalyzes the hydrolysis of fructose 1,6-bisphosphate (Fru 1,6-P2) and sedoheptulose 1,7-bisphosphate (Sed 1,7-P2) to fructose 6-phosphate and sedoheptulose 7-phosphate, respectively. This is D-fructose 1,6-bisphosphatase class 2/sedoheptulose 1,7-bisphosphatase from Trichodesmium erythraeum (strain IMS101).